The sequence spans 502 residues: Cytochrome P450 71B10 (502 aa).

A helical membrane pass occupies residues 1-21 (MTVLWFVSLILLISILLVAVK). Residue Cys-443 coordinates heme.

The protein belongs to the cytochrome P450 family. Heme is required as a cofactor.

The protein localises to the membrane. The polypeptide is Cytochrome P450 71B10 (CYP71B10) (Arabidopsis thaliana (Mouse-ear cress)).